Reading from the N-terminus, the 797-residue chain is Homoaconitase, mitochondrial (797 aa).

The transit peptide at 1-47 directs the protein to the mitochondrion; it reads MVARFVPSAMTVLVARRGLAMASTRRGWRGLAVNLKPAAGRQWRQAY. Cys404, Cys471, and Cys474 together coordinate [4Fe-4S] cluster.

The protein belongs to the aconitase/IPM isomerase family. The cofactor is [4Fe-4S] cluster.

The protein localises to the mitochondrion. It carries out the reaction (2R,3S)-homoisocitrate = cis-homoaconitate + H2O. The protein operates within amino-acid biosynthesis; L-lysine biosynthesis via AAA pathway; L-alpha-aminoadipate from 2-oxoglutarate: step 3/5. Its function is as follows. Catalyzes the reversible hydration of cis-homoaconitate to (2R,3S)-homoisocitrate, a step in the alpha-aminoadipate pathway for lysine biosynthesis. The polypeptide is Homoaconitase, mitochondrial (LYS4) (Chaetomium globosum (strain ATCC 6205 / CBS 148.51 / DSM 1962 / NBRC 6347 / NRRL 1970) (Soil fungus)).